We begin with the raw amino-acid sequence, 358 residues long: tRNA-specific 2-thiouridylase MnmA (358 aa).

ATP contacts are provided by residues 6-13 (AMSGGVDS) and L32. Residue C101 is the Nucleophile of the active site. A disulfide bridge connects residues C101 and C193. G125 contributes to the ATP binding site. Residues 143 to 145 (KDQ) are interaction with tRNA. The Cysteine persulfide intermediate role is filled by C193.

Belongs to the MnmA/TRMU family.

The protein localises to the cytoplasm. The enzyme catalyses S-sulfanyl-L-cysteinyl-[protein] + uridine(34) in tRNA + AH2 + ATP = 2-thiouridine(34) in tRNA + L-cysteinyl-[protein] + A + AMP + diphosphate + H(+). In terms of biological role, catalyzes the 2-thiolation of uridine at the wobble position (U34) of tRNA, leading to the formation of s(2)U34. The chain is tRNA-specific 2-thiouridylase MnmA from Mycobacterium avium (strain 104).